A 204-amino-acid chain; its full sequence is Ras-related protein RabL (204 aa).

Residue 14-21 participates in GTP binding; it reads GDSNVGKT. The Effector region signature appears at 36–44; it reads RPPSIGPDY. Residues 62 to 66 and 120 to 123 contribute to the GTP site; these read DTCGQ and TKSD. Residues Cys-203 and Cys-204 are each lipidated (S-geranylgeranyl cysteine).

This sequence belongs to the small GTPase superfamily. Rab family.

Its subcellular location is the cell membrane. The protein is Ras-related protein RabL (rabL) of Dictyostelium discoideum (Social amoeba).